A 777-amino-acid polypeptide reads, in one-letter code: Ethylene receptor 4 (777 aa).

3 helical membrane-spanning segments follow: residues 49–69 (LLIAASFLSIPLELFYFATCA), 77–97 (AVLHFCAFIVLCGATHLLAAF), and 113–133 (AAKVLAAVASSAAAVSLLTFI). Residues Cys88 and His92 each contribute to the Cu cation site. The region spanning 184–344 (DAHAILRTTA…VVADQAAVAL (161 aa)) is the GAF domain. Residues 387–521 (AMCHAMRRPV…NTESGACRLS (135 aa)) enclose the Histidine kinase domain. Residue His390 is modified to Phosphohistidine; by autocatalysis. The region spanning 645–774 (RVLLADDDAM…ALGAQLCRVL (130 aa)) is the Response regulatory domain. Position 696 is a 4-aspartylphosphate (Asp696).

This sequence belongs to the ethylene receptor family. It depends on Cu cation as a cofactor.

It localises to the endoplasmic reticulum membrane. The enzyme catalyses ATP + protein L-histidine = ADP + protein N-phospho-L-histidine.. Its function is as follows. Ethylene receptor related to bacterial two-component regulators. Acts as a redundant negative regulator of ethylene signaling. In Oryza sativa subsp. indica (Rice), this protein is Ethylene receptor 4.